The following is a 33-amino-acid chain: GLWKTLKDSAKSAVTNVAVTMLDKLRCKLTGGC.

Cys27 and Cys33 form a disulfide bridge.

In terms of tissue distribution, expressed by the skin glands.

It is found in the secreted. Its function is as follows. Antimicrobial peptide. This Pelophylax ridibundus (Marsh frog) protein is Brevinin-2Rk.